The following is a 3174-amino-acid chain: Probable polyketide synthase 15 (3174 aa).

The Ketosynthase family 3 (KS3) domain occupies 23 to 474 (NDEIAIVGIG…GSNCCLILSQ (452 aa)). Active-site for beta-ketoacyl synthase activity residues include C194, H342, and H397. Coiled coils occupy residues 472 to 509 (LSQFKNNENQQQQQQQQQQQQQQQQQQQQQRGQQQYDN) and 574 to 604 (EFNKQKQSQKEKEKEKEREGEEKEQLNRVQT). Basic and acidic residues predominate over residues 578–599 (QKQSQKEKEKEKEREGEEKEQL). A disordered region spans residues 578–601 (QKQSQKEKEKEKEREGEEKEQLNR). The segment at 707 to 740 (GIEASFIVGHSLGEIPAAYCSGMITLDTLCYLIY) is acyl/malonyl transferase. The active-site For acyl/malonyl transferase activity is the S717. Residues 1034 to 1156 (IDILGLSNYD…ANFQLLNNNN (123 aa)) are N-terminal hotdog fold. The PKS/mFAS DH domain occupies 1034-1332 (IDILGLSNYD…CKSLKIVKNP (299 aa)). H1068 acts as the Proton acceptor; for dehydratase activity in catalysis. The tract at residues 1182–1332 (NKTKISRIDL…CKSLKIVKNP (151 aa)) is C-terminal hotdog fold. Catalysis depends on D1241, which acts as the Proton donor; for dehydratase activity. Positions 1758-1793 (LEININNNNNNNNNNNNNNNNNNNNNNNNNNYEDNV) form a coiled coil. The region spanning 2653–2730 (VDSLNIKDIF…LVIKIIITAI (78 aa)) is the Carrier domain. O-(pantetheine 4'-phosphoryl)serine is present on S2690.

It depends on pantetheine 4'-phosphate as a cofactor.

In terms of biological role, probable polyketide synthase. This chain is Probable polyketide synthase 15 (pks15), found in Dictyostelium discoideum (Social amoeba).